A 425-amino-acid chain; its full sequence is Histidine--tRNA ligase 1 (425 aa).

This sequence belongs to the class-II aminoacyl-tRNA synthetase family. As to quaternary structure, homodimer.

The protein localises to the cytoplasm. The catalysed reaction is tRNA(His) + L-histidine + ATP = L-histidyl-tRNA(His) + AMP + diphosphate + H(+). This chain is Histidine--tRNA ligase 1, found in Bacillus thuringiensis subsp. konkukian (strain 97-27).